The primary structure comprises 103 residues: Matrix Gla protein (103 aa).

The signal sequence occupies residues 1-19; it reads MKSLLLLSILAALAVAALC. Position 21 is a 4-carboxyglutamate; partial (Glu21). A phosphoserine mark is found at Ser22, Ser25, and Ser28. The Gla domain occupies 51–97; that stretch reads RAKAQERIRELNKPQYELNREACDDFKLCERYAMVYGYNAAYDRYFR. 4-carboxyglutamate is present on residues Glu56, Glu60, Glu67, and Glu71. Cys73 and Cys79 are oxidised to a cystine. The propeptide at 99–102 is removed in short form; probably by carboxypeptidase N; the sequence is RRGA. A propeptide (removed in long form; probably by carboxypeptidase H) is located at residue Lys103.

Belongs to the osteocalcin/matrix Gla protein family. In terms of processing, requires vitamin K-dependent gamma-carboxylation for its function.

Its subcellular location is the secreted. Its function is as follows. Associates with the organic matrix of bone and cartilage. Thought to act as an inhibitor of bone formation. This Bos taurus (Bovine) protein is Matrix Gla protein (MGP).